Reading from the N-terminus, the 326-residue chain is MKSFTIAALAALWAQEAAAHATFQDLWIDGVDYGSQCVRLPASNSPVTNVASDDIRCNVGTSRPTVKCPVKAGSTVTIEMHQQPGDRSCANEAIGGDHYGPVMVYMSKVDDAVTADGSSGWFKVFQDSWAKNPSGSTGDDDYWGTKDLNSCCGKMNVKIPEDIEPGDYLLRAEVIALHVAASSGGAQFYMSCYQLTVTGSGSATPSTVNFPGAYSASDPGILINIHAPMSTYVVPGPTVYAGGSTKSAGSSCSGCEATCTVGSGPSATLTQPTSTATATSAPGGGGSGCTAAKYQQCGGTGYTGCTTCASGSTCSAVSPPYYSQCL.

Positions 1 to 19 (MKSFTIAALAALWAQEAAA) are cleaved as a signal peptide. Cu(2+) is bound by residues H20 and H98. Cysteines 57 and 192 form a disulfide. O2 contacts are provided by H178 and Q187. Cu(2+) is bound at residue Y189. A compositionally biased stretch (low complexity) spans 265-281 (PSATLTQPTSTATATSA). The segment at 265-286 (PSATLTQPTSTATATSAPGGGG) is disordered. In terms of domain architecture, CBM1 spans 289-326 (CTAAKYQQCGGTGYTGCTTCASGSTCSAVSPPYYSQCL).

It belongs to the polysaccharide monooxygenase AA9 family. It depends on Cu(2+) as a cofactor.

The protein localises to the secreted. The catalysed reaction is [(1-&gt;4)-beta-D-glucosyl]n+m + reduced acceptor + O2 = 4-dehydro-beta-D-glucosyl-[(1-&gt;4)-beta-D-glucosyl]n-1 + [(1-&gt;4)-beta-D-glucosyl]m + acceptor + H2O.. Lytic polysaccharide monooxygenase (LPMO) that depolymerizes crystalline and amorphous polysaccharides via the oxidation of scissile alpha- or beta-(1-4)-glycosidic bonds, yielding C1 and C4 oxidation products. Catalysis by LPMOs requires the reduction of the active-site copper from Cu(II) to Cu(I) by a reducing agent and H(2)O(2) or O(2) as a cosubstrate. Shows no activity on wheat arabinoxylan, konjac glucomannan, acetylated spruce galactoglucomannan, or cellopentaose. The sequence is that of AA9 family lytic polysaccharide monooxygenase B from Thermothielavioides terrestris (strain ATCC 38088 / NRRL 8126) (Thielavia terrestris).